The primary structure comprises 690 residues: Cyclic nucleotide-gated channel alpha-1 (690 aa).

The Cytoplasmic portion of the chain corresponds to M1–Y163. 2 disordered regions span residues G33 to R76 and N88 to K151. Acidic residues predominate over residues G40–T54. Over residues R64–R76 the composition is skewed to polar residues. Positions S111 to K151 are enriched in basic and acidic residues. Residues Y164 to A185 traverse the membrane as a helical segment. The Extracellular segment spans residues C186–L195. The chain crosses the membrane as a helical span at residues E196–V215. Topologically, residues R216–T241 are cytoplasmic. The chain crosses the membrane as a helical span at residues F242–V251. Residues I252 to N264 lie on the Extracellular side of the membrane. A helical transmembrane segment spans residues Y265 to F283. The Cytoplasmic portion of the chain corresponds to Q284–N291. A helical membrane pass occupies residues Y292–V315. Residues P293–N402 are ion conduction pathway. The Extracellular segment spans residues Y316–R342. N327 is a glycosylation site (N-linked (GlcNAc...) asparagine). The next 2 helical transmembrane spans lie at L343–Y373 and F374–S399. Positions T360–E363 are selectivity filter. Topologically, residues N400–D690 are cytoplasmic. Residues A403 to A479 are C-linker. The cyclic nucleotide-binding domain (CNBD) stretch occupies residues E482 to K603. The 3',5'-cyclic GMP site is built by G543, S546, R559, and T560. R559 and T560 together coordinate 3',5'-cyclic AMP. Residues L621 to L664 are a coiled coil.

Belongs to the cyclic nucleotide-gated cation channel (TC 1.A.1.5) family. CNGA1 subfamily. As to quaternary structure, forms a heterotetramer with CNGB1 in a 3:1 ratio. May also form cyclic nucleotide-activated homotetrameric channels, that are efficiently activated by saturating cGMP, but poorly activated by saturating cAMP compared to the heterotetramer with CNGB1. The channel binds Ca(2+)-bound CALM1 via CaM1 and CaM2 regions of the CNGB1 subunit; this interaction modulates the affinity of the channel for cNMPs in response to intracellular Ca(2+) levels. Expressed in the retina, in rod cells (at protein level).

The protein localises to the cell membrane. The enzyme catalyses Ca(2+)(in) = Ca(2+)(out). It catalyses the reaction Na(+)(in) = Na(+)(out). It carries out the reaction K(+)(in) = K(+)(out). The catalysed reaction is NH4(+)(in) = NH4(+)(out). The enzyme catalyses Rb(+)(in) = Rb(+)(out). It catalyses the reaction Li(+)(in) = Li(+)(out). It carries out the reaction Cs(+)(in) = Cs(+)(out). Functionally, pore-forming subunit of the rod cyclic nucleotide-gated channel. Mediates rod photoresponses at dim light converting transient changes in intracellular cGMP levels into electrical signals. In the dark, cGMP levels are high and keep the channel open enabling a steady inward current carried by Na(+) and Ca(2+) ions that leads to membrane depolarization and neurotransmitter release from synaptic terminals. Upon photon absorption cGMP levels decline leading to channel closure and membrane hyperpolarization that ultimately slows neurotransmitter release and signals the presence of light, the end point of the phototransduction cascade. Conducts cGMP- and cAMP-gated ion currents, with permeability for monovalent and divalent cations. The selectivity for Ca(2+) over Na(+) increases with cGMP concentrations, whereas the selectivity among monovalent ions is independent of the cGMP levels. In Bos taurus (Bovine), this protein is Cyclic nucleotide-gated channel alpha-1.